A 184-amino-acid chain; its full sequence is Chromobox protein homolog hpl-1 (184 aa).

Residues 1–13 (MSRQNPVRSTRGN) show a composition bias toward polar residues. Disordered regions lie at residues 1-27 (MSRQNPVRSTRGNSLRAREAQQAQDAP) and 87-115 (AAKRTTRKRRYSPQPSTSSSAELQPSTSD). The region spanning 37 to 95 (FVVEKVLNKRLTRGGSEYYIKWQGFPESECSWEPIENLQCDRMIQEYEKEAAKRTTRKR) is the Chromo domain. Residues 99–115 (PQPSTSSSAELQPSTSD) show a composition bias toward polar residues.

As to quaternary structure, interacts with histone demethylase spr-5. Interacts with chromobox protein homolog hpl-2. Interacts with histone H3 tails methylated at 'Lys-9' (H3K9me3) and 'Lys-23'(H3K23me2). Interacts with histone H1 variant his-24 (when monomethylated at 'Lys-14'); the interaction is direct. May interact with the REST corepressor rcor-1, histone deacetylase hda-1, and the histone demethylase lsd-1.

It localises to the nucleus. Functionally, seems to be involved in transcriptional silencing in heterochromatin-like complexes. Involved in epigenetic repression. Probably does not act as global transcriptional repressor. Plays a role in linking epigenetic regulation with the innate immune response. Acting in concert with chromobox protein homolog hpl-2 and histone H1 protein his-24, involved in reproduction, somatic gonad development, male tail development and vulval cell fate decisions; perhaps as a result of modulating expression of Hox genes mab-5 and egl-5. Role in growth and somatic gonad development is antagonized by histone-lysine N-methyltransferase set-2/SET1. Required for larval development, acting redundantly with hpl-2. Plays a role in the formation of the vulva and in fertility, acting together with a CoREST-like complex, and hpl-2. The chain is Chromobox protein homolog hpl-1 from Caenorhabditis elegans.